Reading from the N-terminus, the 132-residue chain is Fatty acid-binding protein, intestinal (132 aa).

N-acetylalanine is present on alanine 2. Hexadecanoate is bound by residues tryptophan 83 and arginine 107. Tryptophan 83 and arginine 107 together coordinate tetradecanoate.

The protein belongs to the calycin superfamily. Fatty-acid binding protein (FABP) family. As to expression, expressed in the small intestine and at much lower levels in the large intestine. Highest expression levels in the jejunum.

Its subcellular location is the cytoplasm. Its function is as follows. FABPs are thought to play a role in the intracellular transport of long-chain fatty acids and their acyl-CoA esters. FABP2 is probably involved in triglyceride-rich lipoprotein synthesis. Binds saturated long-chain fatty acids with a high affinity, but binds with a lower affinity to unsaturated long-chain fatty acids. FABP2 may also help maintain energy homeostasis by functioning as a lipid sensor. The sequence is that of Fatty acid-binding protein, intestinal (FABP2) from Homo sapiens (Human).